The sequence spans 737 residues: Polyribonucleotide nucleotidyltransferase (737 aa).

Residues Asp489 and Asp495 each coordinate Mg(2+). The 60-residue stretch at 556–615 (PKIDTIKIDVDKIKIVIGKGGETIDKIIAETGVKIDIDEEGNVSIYSSDQDAINRAKEII) folds into the KH domain. The 69-residue stretch at 625 to 693 (DEVYRAKVVR…EKGRIDASMK (69 aa)) folds into the S1 motif domain. Positions 691–737 (SMKALLPRPPKPEHDEKGEKSERPHRPRHQKDHKPKKEFTETPKDSE) are disordered. The span at 700–714 (PKPEHDEKGEKSERP) shows a compositional bias: basic and acidic residues. The span at 715-724 (HRPRHQKDHK) shows a compositional bias: basic residues. Positions 725-737 (PKKEFTETPKDSE) are enriched in basic and acidic residues.

The protein belongs to the polyribonucleotide nucleotidyltransferase family. Mg(2+) serves as cofactor.

The protein localises to the cytoplasm. The enzyme catalyses RNA(n+1) + phosphate = RNA(n) + a ribonucleoside 5'-diphosphate. Its function is as follows. Involved in mRNA degradation. Catalyzes the phosphorolysis of single-stranded polyribonucleotides processively in the 3'- to 5'-direction. The sequence is that of Polyribonucleotide nucleotidyltransferase from Streptococcus pneumoniae (strain JJA).